A 1045-amino-acid chain; its full sequence is Probable beta-glucosidase E (1045 aa).

The interval 1 to 74 is disordered; the sequence is MAPPDSTHGG…SGSYQLRPVD (74 aa). Over 1–163 the chain is Cytoplasmic; it reads MAPPDSTHGG…PVKYARIWWR (163 aa). The segment covering 11–20 has biased composition (basic and acidic residues); sequence SFRDHLKTND. The chain crosses the membrane as a helical; Signal-anchor for type II membrane protein span at residues 164–184; sequence TLLAVIVTLAVVVWGFLSFAV. The Extracellular segment spans residues 185–1045; the sequence is SHREEPKVWP…SRDLPLMGEY (861 aa). Asparagine 226, asparagine 234, and asparagine 402 each carry an N-linked (GlcNAc...) asparagine glycan. Aspartate 430 is an active-site residue. Residues asparagine 473, asparagine 512, asparagine 577, asparagine 893, asparagine 902, and asparagine 988 are each glycosylated (N-linked (GlcNAc...) asparagine).

Belongs to the glycosyl hydrolase 3 family.

The protein resides in the cell membrane. It carries out the reaction Hydrolysis of terminal, non-reducing beta-D-glucosyl residues with release of beta-D-glucose.. It functions in the pathway glycan metabolism; cellulose degradation. Its function is as follows. Beta-glucosidases are one of a number of cellulolytic enzymes involved in the degradation of cellulosic biomass. Catalyzes the last step releasing glucose from the inhibitory cellobiose. The protein is Probable beta-glucosidase E (bglE) of Neosartorya fischeri (strain ATCC 1020 / DSM 3700 / CBS 544.65 / FGSC A1164 / JCM 1740 / NRRL 181 / WB 181) (Aspergillus fischerianus).